Consider the following 343-residue polypeptide: Dipeptide transport system permease protein DppC (343 aa).

The next 5 helical transmembrane spans lie at 44 to 64 (LVAM…AFVV), 144 to 164 (LIIA…YGII), 195 to 215 (LALL…LFAW), 259 to 279 (GVIV…EAVL), and 309 to 329 (FQLI…IFFG). Positions 140-329 (LRISLIIALA…VLSLTFIFFG (190 aa)) constitute an ABC transmembrane type-1 domain.

It belongs to the binding-protein-dependent transport system permease family. OppBC subfamily. In terms of assembly, the complex is composed of two ATP-binding proteins (DppD and DppF), two transmembrane proteins (DppB and DppC) and a solute-binding protein (DppA).

The protein localises to the cell membrane. Its function is as follows. Part of the ABC transporter DppABCDF involved in dipeptide transport. Responsible for the translocation of the substrate across the membrane. The polypeptide is Dipeptide transport system permease protein DppC (Lactococcus lactis subsp. cremoris (strain MG1363)).